The primary structure comprises 1041 residues: MSSDAMSDYSHDDEHDPQTDELRETALVTLEALISSCSSQMQSYLPNTINSALRFLKYDPNVADMGEDEEMSGTQDDGSEDDVTEEPDLEDDDFEDFEEEGGYSDIDDMSWKVRRCAAKLLYAVISTYGRGRALDDTSLYQQIAPAIVARFNKEREESVKLELVSTMDALVRKTAEGSMIMTSSGFLESVGSGSKISRKRRRQDSDASMIDFEPSMGTSSAAGTPLAAPSSPQSGPQSELANALPVIVRSLVTMWKQASIHLKQAIIILLKSLALVRYGGLADHLQQIEDPIADVLKSSLSGAPSASIGISASAGTLQIETLSLISAISETHASDALLPFLIALIPGVIVAVNDKNYKVSSEALAAVEQIVKALTPPRVTTASQDLIFQLEKLYDVSHSRITDTSADLEVRQRAIHVLGVLLARTSDEQGSAFLSFEKRSKGLVTLVDRLKNETTRLSAVRAIDDVAVLCSRKDDVDSNWVREVTAELGAQLRKSDRVLRSASLETLRSLSMNPNTRAHYDGETMKNLEECLIPLISVEDVHLLAPSLIIIAKLVPGNAQLLVNDGLVSAICSIVRTSLAGTVLKALLLLVKVIGEEGSGLTLMQNLLQDVGVNGDTSVVGRSIGTLLVHGGSNVGVRMEDFLSELQKTQDPQRQCLALAILGESALRLGASCSLTPNVFIPHFNSKSEKVRLASATALGNAAAGNVKAYLPTILGGLEKSDPQSYLLLHSVKELLQHPEMVRRDVAPSALKLWQALLVVSKEEDNRAMGAECVGRLALLDPPAYIPQFQEYLANGDAGIRSIVVSAFRFTLSDSRDVFNDVLRPLIVPLLVNMLSDRDLGNHRLALTTLNSAIHNKLALILPHLGELLPAVLGDTQIKPELIREVQMGPFKHKVDDGLELRKSAYETVYAALDTSFSLSHITELYSRILAGIDDEQDIRTICNLMTSKLITLAPEETQRHLDALSERYTAILNFKPKENAVKQEIEKAQEASTGVLKITRELSKAFPNAETMGDHHKWKAYMEMVRAQFGTQLSNLESEF.

Disordered regions lie at residues 1–24 and 64–103; these read MSSD…ELRE and DMGE…EGGY. Basic and acidic residues predominate over residues 9 to 24; the sequence is YSHDDEHDPQTDELRE. The segment covering 65–103 has biased composition (acidic residues); the sequence is MGEDEEMSGTQDDGSEDDVTEEPDLEDDDFEDFEEEGGY. An HEAT 1 repeat occupies 138 to 176; sequence SLYQQIAPAIVARFNKEREESVKLELVSTMDALVRKTAE. Residues 189 to 237 form a disordered region; sequence SVGSGSKISRKRRRQDSDASMIDFEPSMGTSSAAGTPLAAPSSPQSGPQ. Positions 225–237 are enriched in low complexity; it reads PLAAPSSPQSGPQ. HEAT repeat units lie at residues 242–279, 339–376, 434–472, 479–516, 525–560, 598–637, 670–708, 710–744, 780–817, and 822–867; these read NALP…VRYG, PFLI…ALTP, LSFE…LCSR, NWVR…NPNT, MKNL…GNAQ, GSGL…NVGV, GASC…GNVK, YLPT…MVRR, LDPP…DSRD, and VLRP…HLGE.

It belongs to the CAND family. In terms of assembly, interacts with candA-N. Interacts with unneddylated cullins culA and culD.

It is found in the nucleus. In terms of biological role, assembly factor of SCF (SKP1-CUL1-F-box protein) E3 ubiquitin ligase complexes that promotes the exchange of the substrate-recognition F-box subunit in SCF complexes, thereby playing a key role in the cellular repertoire of SCF complexes. Acts as a F-box protein exchange factor when interacting with candA-N. The protein is Cullin-associated NEDD8-dissociated protein 1, C-terminal part (candA-C) of Emericella nidulans (strain FGSC A4 / ATCC 38163 / CBS 112.46 / NRRL 194 / M139) (Aspergillus nidulans).